Consider the following 135-residue polypeptide: Lactoylglutathione lyase (135 aa).

The region spanning 2–126 is the VOC domain; sequence QILHTMLRVG…DGYKIEFIEN (125 aa). Histidine 5 is a binding site for Ni(2+). Position 9 (arginine 9) interacts with substrate. Glutamate 56 contributes to the Ni(2+) binding site. The substrate site is built by asparagine 60 and histidine 74. Histidine 74 and glutamate 122 together coordinate Ni(2+). The active-site Proton donor/acceptor is glutamate 122.

This sequence belongs to the glyoxalase I family. In terms of assembly, homodimer. Ni(2+) is required as a cofactor.

It catalyses the reaction (R)-S-lactoylglutathione = methylglyoxal + glutathione. Its pathway is secondary metabolite metabolism; methylglyoxal degradation; (R)-lactate from methylglyoxal: step 1/2. Its function is as follows. Catalyzes the conversion of hemimercaptal, formed from methylglyoxal and glutathione, to S-lactoylglutathione. This chain is Lactoylglutathione lyase (gloA), found in Haemophilus influenzae (strain ATCC 51907 / DSM 11121 / KW20 / Rd).